The following is a 356-amino-acid chain: Homoserine O-succinyltransferase (356 aa).

The active-site Acyl-thioester intermediate is cysteine 146. Substrate is bound by residues lysine 167 and serine 196. The active-site Proton acceptor is the histidine 239. The active site involves glutamate 241. Substrate is bound at residue arginine 253.

Belongs to the MetA family.

The protein resides in the cytoplasm. It carries out the reaction L-homoserine + succinyl-CoA = O-succinyl-L-homoserine + CoA. Its pathway is amino-acid biosynthesis; L-methionine biosynthesis via de novo pathway; O-succinyl-L-homoserine from L-homoserine: step 1/1. Transfers a succinyl group from succinyl-CoA to L-homoserine, forming succinyl-L-homoserine. The polypeptide is Homoserine O-succinyltransferase (Thioalkalivibrio nitratireducens (strain DSM 14787 / UNIQEM 213 / ALEN2)).